Here is a 281-residue protein sequence, read N- to C-terminus: Energy-coupling factor transporter ATP-binding protein EcfA1 (281 aa).

Residues 6–242 (IDVKHLDYRY…GEALIKMGLD (237 aa)) enclose the ABC transporter domain. 42-49 (GHNGSGKS) is an ATP binding site.

The protein belongs to the ABC transporter superfamily. Energy-coupling factor EcfA family. In terms of assembly, forms a stable energy-coupling factor (ECF) transporter complex composed of 2 membrane-embedded substrate-binding proteins (S component), 2 ATP-binding proteins (A component) and 2 transmembrane proteins (T component).

The protein localises to the cell membrane. In terms of biological role, ATP-binding (A) component of a common energy-coupling factor (ECF) ABC-transporter complex. Unlike classic ABC transporters this ECF transporter provides the energy necessary to transport a number of different substrates. This Lactiplantibacillus plantarum (strain ATCC BAA-793 / NCIMB 8826 / WCFS1) (Lactobacillus plantarum) protein is Energy-coupling factor transporter ATP-binding protein EcfA1.